The primary structure comprises 359 residues: MATSSQLLPNGNLSRNGKTKTEDGEEVEAVVGARAAGADAGVALTGRLTGHPSTSGTFMKLKTYLLALRPWSLSASLVPTLLGSALAYRSQWAEEFSLATFFLTAFTVVTVHCAGNVVNTYFDFIKGIDKQKADDRTLVDHILTKDEVVSLGAILYMAGCGGFVLLAVLSPAKMEHLALIYFGGLSSSFLYTGGIGFKYIALGDLVILILFGPISVLFAFMSQTGHLDWTTMGYAIPLALNTEAILHSNNTRDADNDRRAGIVTLAILIGRTASHVLYAMLLFAPYSLFFIFGLKYSLWFLLPLVTLPQAFQIEKRFRNEQTMHLVPRQTAKLNFFFGILYVVACCCAHQLPTFGLRRN.

Positions 1 to 16 (MATSSQLLPNGNLSRN) are enriched in polar residues. Residues 1-23 (MATSSQLLPNGNLSRNGKTKTED) form a disordered region. 8 helical membrane passes run 67–89 (ALRPWSLSASLVPTLLGSALAYR), 98–118 (LATFFLTAFTVVTVHCAGNVV), 148–168 (VVSLGAILYMAGCGGFVLLAV), 177–197 (LALIYFGGLSSSFLYTGGIGF), 200–220 (IALGDLVILILFGPISVLFAF), 262–284 (IVTLAILIGRTASHVLYAMLLFA), 289–311 (FFIFGLKYSLWFLLPLVTLPQAF), and 335–355 (FFFGILYVVACCCAHQLPTFG).

This sequence belongs to the UbiA prenyltransferase family.

The protein resides in the mitochondrion membrane. Its pathway is quinol/quinone metabolism; menaquinone biosynthesis. Prenyltransferase that mediates the formation of menaquinone-4 (MK-4), a vitamin K2 isoform, thereby acting as a mitochondrial electron carrier. Mediates the conversion of phylloquinone (PK) into MK-4, probably by cleaving the side chain of phylloquinone (PK) to release 2-methyl-1,4-naphthoquinone (menadione; K3) and then prenylating it with geranylgeranyl pyrophosphate (GGPP) to form MK-4. MK-4 acts as a membrane electron carrier downstream of a electron transport chain complex, improving mitochondrial oxygen consumption. This Drosophila melanogaster (Fruit fly) protein is UbiA prenyltransferase domain-containing protein 1 homolog (heix).